The chain runs to 32 residues: Ovostatin (32 aa).

Positions 27–30 (CGEQ) form a cross-link, isoglutamyl cysteine thioester (Cys-Gln).

This sequence belongs to the protease inhibitor I39 (alpha-2-macroglobulin) family. As to quaternary structure, homotetramer, which consists of two pairs of disulfide-linked chains.

It is found in the secreted. In terms of biological role, is able to inhibit all four classes of proteinases by a unique 'trapping' mechanism. This protein has a peptide stretch, called the 'bait region' which contains specific cleavage sites for different proteinases. When a proteinase cleaves the bait region, a conformational change is induced in the protein which traps the proteinase. The entrapped enzyme remains active against low molecular weight substrates (activity against high molecular weight substrates is greatly reduced). Following cleavage in the bait region a thioester bond is hydrolyzed and mediates the covalent binding of the protein to the proteinase. The sequence is that of Ovostatin from Anas platyrhynchos (Mallard).